The primary structure comprises 667 residues: Probable potassium transport system protein Kup (667 aa).

The next 12 helical transmembrane spans lie at 16–36 (GFII…LYTM), 58–78 (VSLI…LIAL), 101–121 (WLII…ALTP), 146–166 (TNVI…QRFG), 167–187 (TGVI…VLGI), 221–241 (IFIL…YSDL), 253–273 (WPFV…WILA), 294–314 (VYLV…LISG), 343–363 (LYIP…VLYF), 373–393 (YGLA…YYLI), 399–419 (PLLA…FFLA), and 431–451 (VVVL…GTVI).

Belongs to the HAK/KUP transporter (TC 2.A.72) family.

The protein localises to the cell membrane. The catalysed reaction is K(+)(in) + H(+)(in) = K(+)(out) + H(+)(out). Transport of potassium into the cell. Likely operates as a K(+):H(+) symporter. This chain is Probable potassium transport system protein Kup, found in Streptococcus equi subsp. zooepidemicus (strain H70).